Reading from the N-terminus, the 355-residue chain is Ubiquinone biosynthesis protein COQ4 homolog, mitochondrial (355 aa).

4 residues coordinate Zn(2+): His134, Asp135, His138, and Glu150.

It belongs to the COQ4 family. Component of a multi-subunit COQ enzyme complex. The cofactor is Zn(2+).

The protein resides in the mitochondrion inner membrane. It carries out the reaction a 4-hydroxy-3-methoxy-5-(all-trans-polyprenyl)benzoate + H(+) = a 2-methoxy-6-(all-trans-polyprenyl)phenol + CO2. It functions in the pathway cofactor biosynthesis; ubiquinone biosynthesis. Its function is as follows. Lyase that catalyzes the C1-decarboxylation of 4-hydroxy-3-methoxy-5-(all-trans-polyprenyl)benzoic acid into 2-methoxy-6-(all-trans-polyprenyl)phenol during ubiquinone biosynthesis. This chain is Ubiquinone biosynthesis protein COQ4 homolog, mitochondrial, found in Plasmodium vivax (strain Salvador I).